Reading from the N-terminus, the 252-residue chain is MMLGRTSRLLLVLLFIAYATTSGNGNEGSKVGSCPCDHTVSSHSPPNENIMRHLRKYLKAYQRCFSYVRFQLPLKNVCGGSTDGWVQELMHCFDSGECGHAQPRVVDAPLHRTQLPEPTEAAPSDTATTSQTYLPSTLQRTQQPTPLEGALSLDSKLIPTHETTTYTSGHSLGAEPEAKENQKQLKENRGPQAGTSATVPVLSLLAIVFILAGVLLYVVCKRRKNQLLQHPPDLAASLYTCSRRTRAENGTL.

Residues Met1–Gly25 form the signal peptide. Topologically, residues Asn26–Thr198 are extracellular. 2 disulfides stabilise this stretch: Cys34/Cys64 and Cys36/Cys78. Disordered stretches follow at residues Leu115–Thr145 and Thr163–Thr195. Residues Asp125–Thr145 show a composition bias toward polar residues. Basic and acidic residues predominate over residues Pro176–Arg189. The helical transmembrane segment at Val199–Val219 threads the bilayer. The Cytoplasmic portion of the chain corresponds to Cys220–Leu252.

The protein belongs to the intercrine alpha (chemokine CxC) family. Glycosylated.

The protein localises to the membrane. In terms of biological role, induces a strong chemotactic response. Induces calcium mobilization. Binds to CXCR6/Bonzo. Also acts as a scavenger receptor on macrophages, which specifically binds to OxLDL (oxidized low density lipoprotein), suggesting that it may be involved in pathophysiology such as atherogenesis. This is C-X-C motif chemokine 16 (CXCL16) from Bos taurus (Bovine).